Here is a 131-residue protein sequence, read N- to C-terminus: Small ribosomal subunit protein uS11 (131 aa).

Belongs to the universal ribosomal protein uS11 family. As to quaternary structure, part of the 30S ribosomal subunit. Interacts with proteins S7 and S18. Binds to IF-3.

Its function is as follows. Located on the platform of the 30S subunit, it bridges several disparate RNA helices of the 16S rRNA. Forms part of the Shine-Dalgarno cleft in the 70S ribosome. This Deinococcus radiodurans (strain ATCC 13939 / DSM 20539 / JCM 16871 / CCUG 27074 / LMG 4051 / NBRC 15346 / NCIMB 9279 / VKM B-1422 / R1) protein is Small ribosomal subunit protein uS11.